The sequence spans 448 residues: StAR-related lipid transfer protein 3 (448 aa).

Positions 47 to 219 (FSDVRRTFCL…YSPPESLAGS (173 aa)) constitute an MENTAL domain. 4 helical membrane-spanning segments follow: residues 53 to 73 (TFCL…IIEL), 96 to 116 (FFDI…GYAA), 122 to 142 (WWVI…KVIL), and 150 to 170 (AFGY…TWFL). The FFAT signature appears at 208 to 214 (QFYSPPE). The START domain occupies 232 to 445 (AVTEQEKAFV…LRQRINEVHV (214 aa)).

Belongs to the STARD3 family. Homodimer. Post-translationally, phosphorylated. Phosphorylation allows the tethering of two membranes that participates in the formation of ER-endosome contacts. Phosphorylation of FFAT motif drives membrane tethering between the endoplasmic reticulum and late endosomes that in turn allows the efficient transport of sterol mediated by the START domain.

Its subcellular location is the late endosome membrane. The catalysed reaction is cholesterol(in) = cholesterol(out). Its function is as follows. Sterol-binding protein that mediates cholesterol transport from the endoplasmic reticulum to endosomes. The sterol transport mechanism is triggered by phosphorylation of FFAT motif that leads to membrane tethering between the endoplasmic reticulum and late endosomes. Acts as a lipid transfer protein that redirects sterol to the endosome at the expense of the cell membrane and favors membrane formation inside endosomes. The polypeptide is StAR-related lipid transfer protein 3 (Danio rerio (Zebrafish)).